The following is a 284-amino-acid chain: ATP synthase subunit a (284 aa).

Helical transmembrane passes span 55-75 (AIHVDTLGWSIAMGILFLGLF), 116-136 (IAPLALTIFVWILLMNILKLI), 165-185 (FGMSIGVFLLILFYSFKVKGV), 196-216 (PFNHWIMIPFNLLLEILALII), 234-254 (VVFILIALLPLWIQWTLNVPW), and 255-275 (AIFHILVIPLQAFIFTVLTVV).

The protein belongs to the ATPase A chain family. In terms of assembly, F-type ATPases have 2 components, CF(1) - the catalytic core - and CF(0) - the membrane proton channel. CF(1) has five subunits: alpha(3), beta(3), gamma(1), delta(1), epsilon(1). CF(0) has three main subunits: a(1), b(2) and c(9-12). The alpha and beta chains form an alternating ring which encloses part of the gamma chain. CF(1) is attached to CF(0) by a central stalk formed by the gamma and epsilon chains, while a peripheral stalk is formed by the delta and b chains.

The protein localises to the cell inner membrane. Key component of the proton channel; it plays a direct role in the translocation of protons across the membrane. This chain is ATP synthase subunit a, found in Marinobacter nauticus (strain ATCC 700491 / DSM 11845 / VT8) (Marinobacter aquaeolei).